Reading from the N-terminus, the 255-residue chain is Tryptophan synthase alpha chain (255 aa).

Active-site proton acceptor residues include E44 and D55.

Belongs to the TrpA family. In terms of assembly, tetramer of two alpha and two beta chains.

The enzyme catalyses (1S,2R)-1-C-(indol-3-yl)glycerol 3-phosphate + L-serine = D-glyceraldehyde 3-phosphate + L-tryptophan + H2O. The protein operates within amino-acid biosynthesis; L-tryptophan biosynthesis; L-tryptophan from chorismate: step 5/5. In terms of biological role, the alpha subunit is responsible for the aldol cleavage of indoleglycerol phosphate to indole and glyceraldehyde 3-phosphate. The sequence is that of Tryptophan synthase alpha chain from Dehalococcoides mccartyi (strain ATCC BAA-2100 / JCM 16839 / KCTC 5957 / BAV1).